The chain runs to 569 residues: Urease subunit alpha (569 aa).

One can recognise a Urease domain in the interval 131 to 569 (GGIDAHIHFI…VPMAQRYFLF (439 aa)). Ni(2+) is bound by residues His136, His138, and Lys219. Residue Lys219 is modified to N6-carboxylysine. Residue His221 participates in substrate binding. 2 residues coordinate Ni(2+): His248 and His274. The active-site Proton donor is His322. Asp362 contacts Ni(2+).

The protein belongs to the metallo-dependent hydrolases superfamily. Urease alpha subunit family. In terms of assembly, heterotrimer of UreA (gamma), UreB (beta) and UreC (alpha) subunits. Three heterotrimers associate to form the active enzyme. Ni cation is required as a cofactor. In terms of processing, carboxylation allows a single lysine to coordinate two nickel ions.

Its subcellular location is the cytoplasm. It catalyses the reaction urea + 2 H2O + H(+) = hydrogencarbonate + 2 NH4(+). It functions in the pathway nitrogen metabolism; urea degradation; CO(2) and NH(3) from urea (urease route): step 1/1. This chain is Urease subunit alpha, found in Bacillus sp. (strain TB-90).